The primary structure comprises 345 residues: Anthranilate phosphoribosyltransferase (345 aa).

5-phospho-alpha-D-ribose 1-diphosphate-binding positions include G80, 83-84 (GD), T88, 90-93 (NIST), 108-116 (KHGNRSVSS), and S120. G80 lines the anthranilate pocket. Residue S92 participates in Mg(2+) binding. N111 lines the anthranilate pocket. Position 166 (R166) interacts with anthranilate. Residues D225 and E226 each contribute to the Mg(2+) site.

This sequence belongs to the anthranilate phosphoribosyltransferase family. As to quaternary structure, homodimer. Mg(2+) is required as a cofactor.

It catalyses the reaction N-(5-phospho-beta-D-ribosyl)anthranilate + diphosphate = 5-phospho-alpha-D-ribose 1-diphosphate + anthranilate. It functions in the pathway amino-acid biosynthesis; L-tryptophan biosynthesis; L-tryptophan from chorismate: step 2/5. Its function is as follows. Catalyzes the transfer of the phosphoribosyl group of 5-phosphorylribose-1-pyrophosphate (PRPP) to anthranilate to yield N-(5'-phosphoribosyl)-anthranilate (PRA). The chain is Anthranilate phosphoribosyltransferase from Acetivibrio thermocellus (strain ATCC 27405 / DSM 1237 / JCM 9322 / NBRC 103400 / NCIMB 10682 / NRRL B-4536 / VPI 7372) (Clostridium thermocellum).